We begin with the raw amino-acid sequence, 147 residues long: 3-dehydroquinate dehydratase (147 aa).

The Proton acceptor role is filled by Tyr23. The substrate site is built by Asn75, His81, and Asp88. His101 serves as the catalytic Proton donor. Substrate is bound by residues 102 to 103 and Arg112; that span reads LS.

This sequence belongs to the type-II 3-dehydroquinase family. Homododecamer.

The enzyme catalyses 3-dehydroquinate = 3-dehydroshikimate + H2O. The protein operates within metabolic intermediate biosynthesis; chorismate biosynthesis; chorismate from D-erythrose 4-phosphate and phosphoenolpyruvate: step 3/7. Functionally, catalyzes a trans-dehydration via an enolate intermediate. This is 3-dehydroquinate dehydratase from Hahella chejuensis (strain KCTC 2396).